The following is a 367-amino-acid chain: Cytochrome P450 119 (367 aa).

Heme contacts are provided by His76, Arg80, Thr257, Arg259, His315, and Cys317.

This sequence belongs to the cytochrome P450 family. The cofactor is heme.

It is found in the cytoplasm. This is Cytochrome P450 119 (cyp119) from Sulfurisphaera tokodaii (strain DSM 16993 / JCM 10545 / NBRC 100140 / 7) (Sulfolobus tokodaii).